Consider the following 72-residue polypeptide: Large ribosomal subunit protein bL31 (72 aa).

Zn(2+) is bound by residues cysteine 16, cysteine 18, cysteine 37, and cysteine 40.

This sequence belongs to the bacterial ribosomal protein bL31 family. Type A subfamily. Part of the 50S ribosomal subunit. Zn(2+) is required as a cofactor.

Its function is as follows. Binds the 23S rRNA. This is Large ribosomal subunit protein bL31 from Idiomarina loihiensis (strain ATCC BAA-735 / DSM 15497 / L2-TR).